The following is a 403-amino-acid chain: Acetyl-CoA acetyltransferase 2 (403 aa).

Cysteine 97 (acyl-thioester intermediate) is an active-site residue. Lysine 237 provides a ligand contact to CoA. Residue alanine 254 participates in K(+) binding. Serine 258 is a CoA binding site. K(+) is bound at residue valine 355. Active-site proton acceptor residues include histidine 359 and cysteine 389.

It belongs to the thiolase-like superfamily. Thiolase family. Expressed in root tips, emerging leaves, young leaves, stems, and anthers at the microspore stage.

The protein resides in the cytoplasm. The protein localises to the peroxisome. The enzyme catalyses 2 acetyl-CoA = acetoacetyl-CoA + CoA. It functions in the pathway metabolic intermediate biosynthesis; (R)-mevalonate biosynthesis; (R)-mevalonate from acetyl-CoA: step 1/3. Its function is as follows. Catalyzes the condensation of two molecules of acetyl-CoA to produce acetoacetyl-CoA. Generates the bulk of the acetoacetyl-CoA precursor required for the cytosol-localized, mevalonate-derived isoprenoid biosynthesis. The generated isoprenoids are required for normal growth and development. Essential protein during embryogenesis. The protein is Acetyl-CoA acetyltransferase 2 of Arabidopsis thaliana (Mouse-ear cress).